The chain runs to 833 residues: Leucine--tRNA ligase (833 aa).

The 'HIGH' region motif lies at 41 to 52 (PYPSGAGLHVGH). Positions 610 to 614 (KMSKS) match the 'KMSKS' region motif. K613 is an ATP binding site.

The protein belongs to the class-I aminoacyl-tRNA synthetase family.

The protein localises to the cytoplasm. It catalyses the reaction tRNA(Leu) + L-leucine + ATP = L-leucyl-tRNA(Leu) + AMP + diphosphate. This Streptococcus agalactiae serotype III (strain NEM316) protein is Leucine--tRNA ligase.